The chain runs to 166 residues: Small ribosomal subunit protein bS6 (166 aa).

Composition is skewed to basic and acidic residues over residues 96–142 (HEEG…DRPP) and 149–166 (GGDRGPRRPREGFEGGAE). The disordered stretch occupies residues 96–166 (HEEGPSAMMQ…PREGFEGGAE (71 aa)).

Belongs to the bacterial ribosomal protein bS6 family.

Functionally, binds together with bS18 to 16S ribosomal RNA. In Mesorhizobium japonicum (strain LMG 29417 / CECT 9101 / MAFF 303099) (Mesorhizobium loti (strain MAFF 303099)), this protein is Small ribosomal subunit protein bS6.